The sequence spans 548 residues: DNA ligase (548 aa).

ATP is bound at residue Glu-244. Residue Lys-246 is the N6-AMP-lysine intermediate of the active site. ATP contacts are provided by Arg-251, Arg-266, Glu-295, Phe-334, Arg-405, and Lys-411.

The protein belongs to the ATP-dependent DNA ligase family. It depends on Mg(2+) as a cofactor.

It catalyses the reaction ATP + (deoxyribonucleotide)n-3'-hydroxyl + 5'-phospho-(deoxyribonucleotide)m = (deoxyribonucleotide)n+m + AMP + diphosphate.. Its function is as follows. DNA ligase that seals nicks in double-stranded DNA during DNA replication, DNA recombination and DNA repair. The polypeptide is DNA ligase (Methanoculleus marisnigri (strain ATCC 35101 / DSM 1498 / JR1)).